The sequence spans 389 residues: 3-oxo-Delta(4,5)-steroid 5-beta-reductase (389 aa).

NADP(+)-binding positions include threonine 35–isoleucine 37, arginine 63–arginine 64, aspartate 81–isoleucine 82, threonine 105, and glutamine 143. Catalysis depends on residues lysine 147 and tyrosine 179. Residues tyrosine 179, isoleucine 206, and serine 213–methionine 215 each bind NADP(+).

This sequence belongs to the short-chain dehydrogenases/reductases (SDR) family. Highly divergent. In terms of assembly, homodimer.

The enzyme catalyses 5beta-cholestan-3-one + NADP(+) = cholest-4-en-3-one + NADPH + H(+). The catalysed reaction is 4,5beta-dihydrocortisone + NADP(+) = cortisone + NADPH + H(+). Functionally, involved in cardenolide biosynthesis. Catalyzes the stereospecific conversion of progesterone to 5-beta-pregnane-3,20-dione. Can use progesterone, testosterone, 4-androstene-3,17-dione, cortisol and cortisone as substrates, but not pregnenolone, 21-OH-pregnenolone or isoprogesterone. NADPH could not be replaced by NADH. This is 3-oxo-Delta(4,5)-steroid 5-beta-reductase from Digitalis lanata (Grecian foxglove).